The chain runs to 41 residues: Photosystem I reaction center subunit IX (41 aa).

A helical membrane pass occupies residues 7 to 27; sequence YLSTAPVLLTLWMTFTAGFII.

Belongs to the PsaJ family.

The protein resides in the plastid. Its subcellular location is the chloroplast thylakoid membrane. Its function is as follows. May help in the organization of the PsaE and PsaF subunits. The polypeptide is Photosystem I reaction center subunit IX (Trieres chinensis (Marine centric diatom)).